Consider the following 516-residue polypeptide: 2,3-bisphosphoglycerate-independent phosphoglycerate mutase (516 aa).

Residues aspartate 13 and serine 63 each coordinate Mn(2+). Serine 63 (phosphoserine intermediate) is an active-site residue. Substrate contacts are provided by residues histidine 124, 154 to 155 (RD), arginine 186, arginine 192, 262 to 265 (RPDR), and lysine 337. Mn(2+) contacts are provided by aspartate 404, histidine 408, aspartate 445, histidine 446, and histidine 464.

Belongs to the BPG-independent phosphoglycerate mutase family. Monomer. It depends on Mn(2+) as a cofactor.

The catalysed reaction is (2R)-2-phosphoglycerate = (2R)-3-phosphoglycerate. It functions in the pathway carbohydrate degradation; glycolysis; pyruvate from D-glyceraldehyde 3-phosphate: step 3/5. In terms of biological role, catalyzes the interconversion of 2-phosphoglycerate and 3-phosphoglycerate. This chain is 2,3-bisphosphoglycerate-independent phosphoglycerate mutase, found in Cellvibrio japonicus (strain Ueda107) (Pseudomonas fluorescens subsp. cellulosa).